Reading from the N-terminus, the 473-residue chain is Bifunctional protein HldE (473 aa).

A ribokinase region spans residues 1–317 (MKLSMPRFDQ…RRAVQREQGS (317 aa)). Residue 194–197 (NLSE) participates in ATP binding. Asp-263 is a catalytic residue. The tract at residues 343–473 (FTNGCFDILH…TAIVEKIRQR (131 aa)) is cytidylyltransferase.

The protein in the N-terminal section; belongs to the carbohydrate kinase PfkB family. In the C-terminal section; belongs to the cytidylyltransferase family. As to quaternary structure, homodimer.

The catalysed reaction is D-glycero-beta-D-manno-heptose 7-phosphate + ATP = D-glycero-beta-D-manno-heptose 1,7-bisphosphate + ADP + H(+). The enzyme catalyses D-glycero-beta-D-manno-heptose 1-phosphate + ATP + H(+) = ADP-D-glycero-beta-D-manno-heptose + diphosphate. It participates in nucleotide-sugar biosynthesis; ADP-L-glycero-beta-D-manno-heptose biosynthesis; ADP-L-glycero-beta-D-manno-heptose from D-glycero-beta-D-manno-heptose 7-phosphate: step 1/4. Its pathway is nucleotide-sugar biosynthesis; ADP-L-glycero-beta-D-manno-heptose biosynthesis; ADP-L-glycero-beta-D-manno-heptose from D-glycero-beta-D-manno-heptose 7-phosphate: step 3/4. Its function is as follows. Catalyzes the phosphorylation of D-glycero-D-manno-heptose 7-phosphate at the C-1 position to selectively form D-glycero-beta-D-manno-heptose-1,7-bisphosphate. Functionally, catalyzes the ADP transfer from ATP to D-glycero-beta-D-manno-heptose 1-phosphate, yielding ADP-D-glycero-beta-D-manno-heptose. The sequence is that of Bifunctional protein HldE from Pseudomonas aeruginosa (strain LESB58).